The sequence spans 203 residues: Dual-action ribosomal maturation protein DarP (203 aa).

Positions 1-13 are enriched in polar residues; sequence MQPMTRNSRNSPG. The interval 1–39 is disordered; it reads MQPMTRNSRNSPGSRFPGAFAPEPDMDEPKSKSQKKRDM. A compositionally biased stretch (basic and acidic residues) spans 27-39; it reads DEPKSKSQKKRDM.

It belongs to the DarP family.

It is found in the cytoplasm. Functionally, member of a network of 50S ribosomal subunit biogenesis factors which assembles along the 30S-50S interface, preventing incorrect 23S rRNA structures from forming. Promotes peptidyl transferase center (PTC) maturation. The chain is Dual-action ribosomal maturation protein DarP from Cupriavidus pinatubonensis (strain JMP 134 / LMG 1197) (Cupriavidus necator (strain JMP 134)).